Reading from the N-terminus, the 542-residue chain is Adenine deaminase (542 aa).

Belongs to the metallo-dependent hydrolases superfamily. Adenine deaminase family. It depends on Mn(2+) as a cofactor.

The enzyme catalyses adenine + H2O + H(+) = hypoxanthine + NH4(+). The protein is Adenine deaminase of Methanosphaera stadtmanae (strain ATCC 43021 / DSM 3091 / JCM 11832 / MCB-3).